The primary structure comprises 259 residues: Probable kinetochore protein spc25 (259 aa).

Residues 1-20 (MSRKSVMSSTFEPSLSTSRQ) are compositionally biased toward polar residues. Positions 1-25 (MSRKSVMSSTFEPSLSTSRQPLGPS) are disordered. A coiled-coil region spans residues 59–162 (RKRVLEERNQ…HAAQLEAQAR (104 aa)).

The protein belongs to the SPC25 family. In terms of assembly, component of the NDC80 complex, which consists of kpr-1/ndc80, kpr-2/nuf2, kpr-3/spc24 and kpr-4/spc25.

The protein resides in the nucleus. It localises to the chromosome. It is found in the centromere. The protein localises to the kinetochore. In terms of biological role, acts as a component of the essential kinetochore-associated NDC80 complex, which is required for chromosome segregation and spindle checkpoint activity. The sequence is that of Probable kinetochore protein spc25 (kpr-4) from Neurospora crassa (strain ATCC 24698 / 74-OR23-1A / CBS 708.71 / DSM 1257 / FGSC 987).